The following is a 95-amino-acid chain: Pyrimidine/purine nucleoside phosphorylase (95 aa).

It belongs to the nucleoside phosphorylase PpnP family.

It carries out the reaction a purine D-ribonucleoside + phosphate = a purine nucleobase + alpha-D-ribose 1-phosphate. The catalysed reaction is adenosine + phosphate = alpha-D-ribose 1-phosphate + adenine. It catalyses the reaction cytidine + phosphate = cytosine + alpha-D-ribose 1-phosphate. The enzyme catalyses guanosine + phosphate = alpha-D-ribose 1-phosphate + guanine. It carries out the reaction inosine + phosphate = alpha-D-ribose 1-phosphate + hypoxanthine. The catalysed reaction is thymidine + phosphate = 2-deoxy-alpha-D-ribose 1-phosphate + thymine. It catalyses the reaction uridine + phosphate = alpha-D-ribose 1-phosphate + uracil. The enzyme catalyses xanthosine + phosphate = alpha-D-ribose 1-phosphate + xanthine. Catalyzes the phosphorolysis of diverse nucleosides, yielding D-ribose 1-phosphate and the respective free bases. Can use uridine, adenosine, guanosine, cytidine, thymidine, inosine and xanthosine as substrates. Also catalyzes the reverse reactions. The protein is Pyrimidine/purine nucleoside phosphorylase of Yersinia enterocolitica serotype O:8 / biotype 1B (strain NCTC 13174 / 8081).